We begin with the raw amino-acid sequence, 68 residues long: Protein SrnB (68 aa).

The helical transmembrane segment at Tyr23 to Phe42 threads the bilayer.

Belongs to the Hok/Gef family.

It is found in the cell inner membrane. Toxic component of a type I toxin-antitoxin (TA) system. Its normal function is believed to be effective plasmid stabilization through postsegregational killing of cells that have lost the F plasmid. Promotes degradation of stable RNA in E.coli. The polypeptide is Protein SrnB (srnB) (Escherichia coli (strain K12)).